A 340-amino-acid chain; its full sequence is Deubiquitinase SseL (340 aa).

His-223 is an active-site residue. The active-site Nucleophile is the Cys-285.

Belongs to the peptidase C79 family.

The protein resides in the secreted. It localises to the host cytoplasm. Its function is as follows. Effector proteins function to alter host cell physiology and promote bacterial survival in host tissues. This protease targets the host cell ubiquitin pathway by acting as a deubiquitinase in infected host cells. The chain is Deubiquitinase SseL (sseL) from Salmonella paratyphi B (strain ATCC BAA-1250 / SPB7).